A 144-amino-acid polypeptide reads, in one-letter code: Transcription antitermination protein NusB (144 aa).

It belongs to the NusB family.

In terms of biological role, involved in transcription antitermination. Required for transcription of ribosomal RNA (rRNA) genes. Binds specifically to the boxA antiterminator sequence of the ribosomal RNA (rrn) operons. The sequence is that of Transcription antitermination protein NusB from Paraburkholderia phytofirmans (strain DSM 17436 / LMG 22146 / PsJN) (Burkholderia phytofirmans).